Reading from the N-terminus, the 470-residue chain is E3 SUMO-protein ligase EGR2 (470 aa).

The span at 126–141 (PPASTTASSSVTSASP) shows a compositional bias: low complexity. Disordered stretches follow at residues 126-153 (PPAS…GVCT), 159-178 (PELD…SGCT), and 185-210 (PSAF…SYPS). Low complexity predominate over residues 190-202 (SPPSTTSTSSLAY). Lys247 bears the N6-acetyllysine; by EP300 mark. Over residues 275 to 291 (GPGAGVTGPGASGGGEG) the composition is skewed to gly residues. Positions 275 to 345 (GPGAGVTGPG…PYPCPAEGCD (71 aa)) are disordered. C2H2-type zinc fingers lie at residues 337–361 (YPCP…IRIH), 367–389 (FQCR…IRTH), and 395–417 (FACD…TKIH). A disordered region spans residues 408–470 (DERKRHTKIH…ASCTSRTRTP (63 aa)). Basic residues predominate over residues 412–422 (RHTKIHLRQKE). The segment covering 426–439 (SAPSAPPSAQSSAS) has biased composition (low complexity). Gly residues predominate over residues 440–450 (GPGGSQAGGSL).

This sequence belongs to the EGR C2H2-type zinc-finger protein family. Interacts with HCFC1. Interacts with WWP2. Interacts with UBC9. Interacts with CITED1. Interacts (via phosphorylated form) with SFN. Ubiquitinated by WWP2 leading to proteasomal degradation. Post-translationally, acetylated at Lys-247. May be deacetylated by HDAC6, HDAC10 or SIRT1. As to expression, expressed mainly in the thymus.

It localises to the nucleus. It functions in the pathway protein modification; protein sumoylation. Functionally, sequence-specific DNA-binding transcription factor. Plays a role in hindbrain segmentation by regulating the expression of a subset of homeobox containing genes and in Schwann cell myelination by regulating the expression of genes involved in the formation and maintenance of myelin. Binds to two EGR2-consensus sites EGR2A (5'-CTGTAGGAG-3') and EGR2B (5'-ATGTAGGTG-3') in the HOXB3 enhancer and promotes HOXB3 transcriptional activation. Binds to specific DNA sites located in the promoter region of HOXA4, HOXB2 and ERBB2. Regulates hindbrain segmentation by controlling the expression of Hox genes, such as HOXA4, HOXB3 and HOXB2, and thereby specifying odd and even rhombomeres. Promotes the expression of HOXB3 in the rhombomere r5 and of HOXB3 in r3 and r5 in the hindbrain. Regulates myelination in the peripheral nervous system after birth, possibly by regulating the expression of myelin proteins, such as MPZ, and by promoting the differentiation of Schwann cells. Involved in the development of the jaw openener musculature, probably by playing a role in its innervation through trigeminal motor neurons. May play a role in adipogenesis, possibly by regulating the expression of CEBPB. Its function is as follows. E3 SUMO-protein ligase helping SUMO1 conjugation to its coregulators NAB1 and NAB2, whose sumoylation down-regulates EGR2 transcriptional activity. This is E3 SUMO-protein ligase EGR2 (Egr2) from Mus musculus (Mouse).